Reading from the N-terminus, the 230-residue chain is PKHD-type hydroxylase PD_1553 (230 aa).

A Fe2OG dioxygenase domain is found at 78–182 (RTLPPRFNRY…RIASFFWVQS (105 aa)). His96, Asp98, and His163 together coordinate Fe cation. Arg173 serves as a coordination point for 2-oxoglutarate.

Fe(2+) is required as a cofactor. L-ascorbate serves as cofactor.

The chain is PKHD-type hydroxylase PD_1553 from Xylella fastidiosa (strain Temecula1 / ATCC 700964).